The sequence spans 201 residues: ATP-dependent Clp protease proteolytic subunit (201 aa).

S98 acts as the Nucleophile in catalysis. Residue H123 is part of the active site.

The protein belongs to the peptidase S14 family. In terms of assembly, fourteen ClpP subunits assemble into 2 heptameric rings which stack back to back to give a disk-like structure with a central cavity, resembling the structure of eukaryotic proteasomes.

It localises to the cytoplasm. It catalyses the reaction Hydrolysis of proteins to small peptides in the presence of ATP and magnesium. alpha-casein is the usual test substrate. In the absence of ATP, only oligopeptides shorter than five residues are hydrolyzed (such as succinyl-Leu-Tyr-|-NHMec, and Leu-Tyr-Leu-|-Tyr-Trp, in which cleavage of the -Tyr-|-Leu- and -Tyr-|-Trp bonds also occurs).. Its function is as follows. Cleaves peptides in various proteins in a process that requires ATP hydrolysis. Has a chymotrypsin-like activity. Plays a major role in the degradation of misfolded proteins. The polypeptide is ATP-dependent Clp protease proteolytic subunit (Rickettsia conorii (strain ATCC VR-613 / Malish 7)).